Here is a 354-residue protein sequence, read N- to C-terminus: Uroporphyrinogen decarboxylase (354 aa).

Substrate is bound by residues 25–29 (RQAGR), aspartate 75, tyrosine 152, threonine 207, and histidine 330.

The protein belongs to the uroporphyrinogen decarboxylase family. Homodimer.

It localises to the cytoplasm. It catalyses the reaction uroporphyrinogen III + 4 H(+) = coproporphyrinogen III + 4 CO2. It participates in porphyrin-containing compound metabolism; protoporphyrin-IX biosynthesis; coproporphyrinogen-III from 5-aminolevulinate: step 4/4. Functionally, catalyzes the decarboxylation of four acetate groups of uroporphyrinogen-III to yield coproporphyrinogen-III. This Xanthomonas oryzae pv. oryzae (strain MAFF 311018) protein is Uroporphyrinogen decarboxylase.